Reading from the N-terminus, the 152-residue chain is Ribosome maturation factor RimP (152 aa).

This sequence belongs to the RimP family.

It localises to the cytoplasm. Required for maturation of 30S ribosomal subunits. The sequence is that of Ribosome maturation factor RimP from Burkholderia orbicola (strain MC0-3).